A 247-amino-acid polypeptide reads, in one-letter code: Adenosylcobinamide-GDP ribazoletransferase (247 aa).

Helical transmembrane passes span 1–21 (MLRL…PFSF), 37–57 (LVGL…ALAL), 61–81 (VADL…HLDG), 109–129 (AVGV…LFAV), and 176–196 (VAVA…LPGI).

Belongs to the CobS family. Requires Mg(2+) as cofactor.

It is found in the cell inner membrane. It carries out the reaction alpha-ribazole + adenosylcob(III)inamide-GDP = adenosylcob(III)alamin + GMP + H(+). It catalyses the reaction alpha-ribazole 5'-phosphate + adenosylcob(III)inamide-GDP = adenosylcob(III)alamin 5'-phosphate + GMP + H(+). The protein operates within cofactor biosynthesis; adenosylcobalamin biosynthesis; adenosylcobalamin from cob(II)yrinate a,c-diamide: step 7/7. Its function is as follows. Joins adenosylcobinamide-GDP and alpha-ribazole to generate adenosylcobalamin (Ado-cobalamin). Also synthesizes adenosylcobalamin 5'-phosphate from adenosylcobinamide-GDP and alpha-ribazole 5'-phosphate. The polypeptide is Adenosylcobinamide-GDP ribazoletransferase (Geotalea daltonii (strain DSM 22248 / JCM 15807 / FRC-32) (Geobacter daltonii)).